The chain runs to 208 residues: Cysteine-rich protein 2 (208 aa).

In terms of domain architecture, LIM zinc-binding 1 spans 5–57; sequence CPKCDKTVYFAEKVSSLGKDWHKFCLKCERCNKTLTPGGHAEHDGKPFCHKPC. Lysine 23 bears the N6-acetyllysine mark. Position 104 is a phosphoserine (serine 104). The 53-residue stretch at 126–178 folds into the LIM zinc-binding 2 domain; it reads CPRCNKRVYFAEKVTSLGKDWHRPCLRCERCSKTLTPGGHAEHDGQPYCHKPC. Residues lysine 138 and lysine 144 each carry the N6-acetyllysine modification.

In terms of assembly, interacts with TGFB1I1. Expressed more abundantly in liver and kidney of females than that of males. Equally expressed in brain, lung and heart.

The chain is Cysteine-rich protein 2 (Crip2) from Rattus norvegicus (Rat).